The primary structure comprises 377 residues: Succinyl-diaminopimelate desuccinylase (377 aa).

His-67 serves as a coordination point for Zn(2+). The active site involves Asp-69. Residue Asp-100 coordinates Zn(2+). Residue Glu-134 is the Proton acceptor of the active site. Residues Glu-135, Glu-163, and His-349 each contribute to the Zn(2+) site.

This sequence belongs to the peptidase M20A family. DapE subfamily. As to quaternary structure, homodimer. Requires Zn(2+) as cofactor. The cofactor is Co(2+).

The catalysed reaction is N-succinyl-(2S,6S)-2,6-diaminopimelate + H2O = (2S,6S)-2,6-diaminopimelate + succinate. The protein operates within amino-acid biosynthesis; L-lysine biosynthesis via DAP pathway; LL-2,6-diaminopimelate from (S)-tetrahydrodipicolinate (succinylase route): step 3/3. Functionally, catalyzes the hydrolysis of N-succinyl-L,L-diaminopimelic acid (SDAP), forming succinate and LL-2,6-diaminopimelate (DAP), an intermediate involved in the bacterial biosynthesis of lysine and meso-diaminopimelic acid, an essential component of bacterial cell walls. The polypeptide is Succinyl-diaminopimelate desuccinylase (Mannheimia succiniciproducens (strain KCTC 0769BP / MBEL55E)).